A 339-amino-acid chain; its full sequence is tRNA(Ile)-lysidine synthase (339 aa).

34–39 (SGGPDS) contacts ATP.

Belongs to the tRNA(Ile)-lysidine synthase family.

The protein resides in the cytoplasm. It catalyses the reaction cytidine(34) in tRNA(Ile2) + L-lysine + ATP = lysidine(34) in tRNA(Ile2) + AMP + diphosphate + H(+). In terms of biological role, ligates lysine onto the cytidine present at position 34 of the AUA codon-specific tRNA(Ile) that contains the anticodon CAU, in an ATP-dependent manner. Cytidine is converted to lysidine, thus changing the amino acid specificity of the tRNA from methionine to isoleucine. The protein is tRNA(Ile)-lysidine synthase of Methylobacterium nodulans (strain LMG 21967 / CNCM I-2342 / ORS 2060).